The following is a 279-amino-acid chain: Lactose operon transcription activator (279 aa).

The HTH araC/xylS-type domain maps to 174 to 272 (QHAVDFINTN…EISASEYRHH (99 aa)). 2 consecutive DNA-binding regions (H-T-H motif) follow at residues 191–212 (EDVAKSVNITRSHLYKLFKKNL) and 239–262 (ISDISRQVGYKDPLLFSKNFTKHF).

Transcriptional regulator of the lacPH genes for lactose utilization. The protein is Lactose operon transcription activator (lacR) of Staphylococcus xylosus.